The sequence spans 168 residues: 2-C-methyl-D-erythritol 2,4-cyclodiphosphate synthase (168 aa).

2 residues coordinate a divalent metal cation: Asp-13 and His-15. 4-CDP-2-C-methyl-D-erythritol 2-phosphate-binding positions include 13–15 (DVH) and 39–40 (HS). His-47 serves as a coordination point for a divalent metal cation. 4-CDP-2-C-methyl-D-erythritol 2-phosphate-binding positions include 61 to 63 (DIG), 66 to 70 (FPDTD), Phe-144, and Lys-147.

The protein belongs to the IspF family. Homotrimer. The cofactor is a divalent metal cation.

The catalysed reaction is 4-CDP-2-C-methyl-D-erythritol 2-phosphate = 2-C-methyl-D-erythritol 2,4-cyclic diphosphate + CMP. The protein operates within isoprenoid biosynthesis; isopentenyl diphosphate biosynthesis via DXP pathway; isopentenyl diphosphate from 1-deoxy-D-xylulose 5-phosphate: step 4/6. Its function is as follows. Involved in the biosynthesis of isopentenyl diphosphate (IPP) and dimethylallyl diphosphate (DMAPP), two major building blocks of isoprenoid compounds. Catalyzes the conversion of 4-diphosphocytidyl-2-C-methyl-D-erythritol 2-phosphate (CDP-ME2P) to 2-C-methyl-D-erythritol 2,4-cyclodiphosphate (ME-CPP) with a corresponding release of cytidine 5-monophosphate (CMP). The chain is 2-C-methyl-D-erythritol 2,4-cyclodiphosphate synthase from Ralstonia pickettii (strain 12J).